A 395-amino-acid polypeptide reads, in one-letter code: Chalcone synthase (395 aa).

Residue Cys-164 is part of the active site.

The protein belongs to the thiolase-like superfamily. Chalcone/stilbene synthases family.

It catalyses the reaction (E)-4-coumaroyl-CoA + 3 malonyl-CoA + 3 H(+) = 2',4,4',6'-tetrahydroxychalcone + 3 CO2 + 4 CoA. It participates in secondary metabolite biosynthesis; flavonoid biosynthesis. The primary product of this enzyme is 4,2',4',6'-tetrahydroxychalcone (also termed naringenin-chalcone or chalcone) which can under specific conditions spontaneously isomerize into naringenin. This is Chalcone synthase (CHS) from Betula pendula (European white birch).